Consider the following 163-residue polypeptide: Type II secretion system protein M (163 aa).

Topologically, residues 1 to 19 are cytoplasmic; the sequence is MMDKLQGWWRSISAREQRL. Residues 20 to 40 traverse the membrane as a helical segment; the sequence is VAVGGSCLLIGFCYWIVWQPI. Over 41–163 the chain is Periplasmic; it reads ANRIAERERQ…VRRLQLSRPQ (123 aa).

The protein belongs to the GSP M family. As to quaternary structure, type II secretion system is composed of four main components: the outer membrane complex, the inner membrane complex, the cytoplasmic secretion ATPase and the periplasm-spanning pseudopilus. Forms homodimers. Interacts with ExeL/GspL. Interacts with ExeE/GspE and ExeF/GspF.

Its subcellular location is the cell inner membrane. In terms of biological role, inner membrane component of the type II secretion system required for the energy-dependent secretion of extracellular factors such as proteases and toxins from the periplasm. Plays a role in the complex assembly and recruits ExeL resulting in a stable complex in the inner membrane. Provides thus a link between the energy-providing ExeE protein in the cytoplasm and the rest of the T2SS machinery. In Aeromonas hydrophila, this protein is Type II secretion system protein M (exeM).